A 362-amino-acid chain; its full sequence is 2-aminoethylphosphonate--pyruvate transaminase (362 aa).

Lys-193 bears the N6-(pyridoxal phosphate)lysine mark.

Belongs to the class-V pyridoxal-phosphate-dependent aminotransferase family. PhnW subfamily. In terms of assembly, homodimer. Pyridoxal 5'-phosphate is required as a cofactor.

It catalyses the reaction (2-aminoethyl)phosphonate + pyruvate = phosphonoacetaldehyde + L-alanine. Its function is as follows. Involved in phosphonate degradation. The chain is 2-aminoethylphosphonate--pyruvate transaminase from Bacteroides fragilis (strain ATCC 25285 / DSM 2151 / CCUG 4856 / JCM 11019 / LMG 10263 / NCTC 9343 / Onslow / VPI 2553 / EN-2).